We begin with the raw amino-acid sequence, 271 residues long: Gap junction beta-5 protein (271 aa).

At 1 to 20 (MNWSVFEGLLSGVNKYSTAF) the chain is on the cytoplasmic side. A helical transmembrane segment spans residues 21-40 (GRIWLSLVFVFRVLVYLVTA). Over 41 to 75 (ERVWGDDQKDFDCNTRQPGCTNVCYDEFFPVSHVR) the chain is Extracellular. Residues 76–98 (LWALQLILVTCPSLLVVMHVAYR) traverse the membrane as a helical segment. Topologically, residues 99-124 (KAREKKYQQEVGKGYLYPNPGKKRGG) are cytoplasmic. Residues 125 to 147 (LWWTYVCSLLFKATIDIIFLYLF) form a helical membrane-spanning segment. Residues 148-182 (HAFYPRYTLPSMVKCHSAPCPNTVDCFIAKPSEKN) are Extracellular-facing. A helical transmembrane segment spans residues 183 to 205 (IFIVFMLVTAIVCILLNLVELLY). The Cytoplasmic segment spans residues 206-271 (LVIKRCSECA…PRAHVKKTIL (66 aa)). The tract at residues 217–237 (AKRPPTAHAKNDPNWANPSSK) is disordered.

It belongs to the connexin family. Beta-type (group I) subfamily. As to quaternary structure, a connexon is composed of a hexamer of connexins. In terms of tissue distribution, expressed in skin.

The protein resides in the cell membrane. The protein localises to the cell junction. It is found in the gap junction. Functionally, one gap junction consists of a cluster of closely packed pairs of transmembrane channels, the connexons, through which materials of low MW diffuse from one cell to a neighboring cell. The chain is Gap junction beta-5 protein (Gjb5) from Rattus norvegicus (Rat).